We begin with the raw amino-acid sequence, 502 residues long: D-alanine--D-alanyl carrier protein ligase (502 aa).

150-151 (TS) is an ATP binding site. D-alanine is bound at residue Asp-195. 290 to 295 (NTYGPT) serves as a coordination point for ATP. A D-alanine-binding site is contributed by Val-299. ATP is bound by residues Asp-381 and Lys-490. D-alanine is bound at residue Lys-490.

It belongs to the ATP-dependent AMP-binding enzyme family. DltA subfamily.

The protein resides in the cytoplasm. It catalyses the reaction holo-[D-alanyl-carrier protein] + D-alanine + ATP = D-alanyl-[D-alanyl-carrier protein] + AMP + diphosphate. Its pathway is cell wall biogenesis; lipoteichoic acid biosynthesis. In terms of biological role, catalyzes the first step in the D-alanylation of lipoteichoic acid (LTA), the activation of D-alanine and its transfer onto the D-alanyl carrier protein (Dcp) DltC. In an ATP-dependent two-step reaction, forms a high energy D-alanyl-AMP intermediate, followed by transfer of the D-alanyl residue as a thiol ester to the phosphopantheinyl prosthetic group of the Dcp. D-alanylation of LTA plays an important role in modulating the properties of the cell wall in Gram-positive bacteria, influencing the net charge of the cell wall. The chain is D-alanine--D-alanyl carrier protein ligase from Bacillus licheniformis (strain ATCC 14580 / DSM 13 / JCM 2505 / CCUG 7422 / NBRC 12200 / NCIMB 9375 / NCTC 10341 / NRRL NRS-1264 / Gibson 46).